Reading from the N-terminus, the 359-residue chain is 3-dehydroquinate synthase (359 aa).

Residues 71–76 (DGEQYK), 105–109 (GVIGD), 129–130 (TT), lysine 142, lysine 151, and 169–172 (CLST) contribute to the NAD(+) site. Positions 184, 247, and 264 each coordinate Zn(2+).

The protein belongs to the sugar phosphate cyclases superfamily. Dehydroquinate synthase family. It depends on Co(2+) as a cofactor. The cofactor is Zn(2+). Requires NAD(+) as cofactor.

The protein localises to the cytoplasm. It carries out the reaction 7-phospho-2-dehydro-3-deoxy-D-arabino-heptonate = 3-dehydroquinate + phosphate. Its pathway is metabolic intermediate biosynthesis; chorismate biosynthesis; chorismate from D-erythrose 4-phosphate and phosphoenolpyruvate: step 2/7. Catalyzes the conversion of 3-deoxy-D-arabino-heptulosonate 7-phosphate (DAHP) to dehydroquinate (DHQ). This chain is 3-dehydroquinate synthase, found in Shewanella piezotolerans (strain WP3 / JCM 13877).